Consider the following 177-residue polypeptide: UPF0114 protein HPP12_0190 (177 aa).

4 helical membrane passes run Trp-15–Phe-35, Leu-54–Val-74, Phe-102–Leu-122, and Pro-145–Val-165.

Belongs to the UPF0114 family.

Its subcellular location is the cell membrane. In Helicobacter pylori (strain P12), this protein is UPF0114 protein HPP12_0190.